The chain runs to 207 residues: Thiamine-phosphate synthase (207 aa).

Residues 38–42 (QYRNK) and N70 each bind 4-amino-2-methyl-5-(diphosphooxymethyl)pyrimidine. Mg(2+) is bound by residues D71 and D90. Residue S109 coordinates 4-amino-2-methyl-5-(diphosphooxymethyl)pyrimidine. 2-[(2R,5Z)-2-carboxy-4-methylthiazol-5(2H)-ylidene]ethyl phosphate is bound at residue 136-138 (TAT). K139 contributes to the 4-amino-2-methyl-5-(diphosphooxymethyl)pyrimidine binding site. 2-[(2R,5Z)-2-carboxy-4-methylthiazol-5(2H)-ylidene]ethyl phosphate-binding positions include G165 and 185–186 (VS).

This sequence belongs to the thiamine-phosphate synthase family. Mg(2+) is required as a cofactor.

It catalyses the reaction 2-[(2R,5Z)-2-carboxy-4-methylthiazol-5(2H)-ylidene]ethyl phosphate + 4-amino-2-methyl-5-(diphosphooxymethyl)pyrimidine + 2 H(+) = thiamine phosphate + CO2 + diphosphate. It carries out the reaction 2-(2-carboxy-4-methylthiazol-5-yl)ethyl phosphate + 4-amino-2-methyl-5-(diphosphooxymethyl)pyrimidine + 2 H(+) = thiamine phosphate + CO2 + diphosphate. The enzyme catalyses 4-methyl-5-(2-phosphooxyethyl)-thiazole + 4-amino-2-methyl-5-(diphosphooxymethyl)pyrimidine + H(+) = thiamine phosphate + diphosphate. It functions in the pathway cofactor biosynthesis; thiamine diphosphate biosynthesis; thiamine phosphate from 4-amino-2-methyl-5-diphosphomethylpyrimidine and 4-methyl-5-(2-phosphoethyl)-thiazole: step 1/1. In terms of biological role, condenses 4-methyl-5-(beta-hydroxyethyl)thiazole monophosphate (THZ-P) and 2-methyl-4-amino-5-hydroxymethyl pyrimidine pyrophosphate (HMP-PP) to form thiamine monophosphate (TMP). The sequence is that of Thiamine-phosphate synthase from Xanthomonas campestris pv. campestris (strain 8004).